We begin with the raw amino-acid sequence, 208 residues long: Ribonuclease HII (208 aa).

The RNase H type-2 domain maps to 17 to 208 (LRVCGIDEAG…SFRLRQLGEK (192 aa)). Asp-23, Glu-24, and Asp-120 together coordinate a divalent metal cation.

This sequence belongs to the RNase HII family. Mn(2+) serves as cofactor. Requires Mg(2+) as cofactor.

It localises to the cytoplasm. The catalysed reaction is Endonucleolytic cleavage to 5'-phosphomonoester.. Its function is as follows. Endonuclease that specifically degrades the RNA of RNA-DNA hybrids. The sequence is that of Ribonuclease HII from Chlorobium luteolum (strain DSM 273 / BCRC 81028 / 2530) (Pelodictyon luteolum).